The sequence spans 58 residues: MRFRIRKCPSCGRYTLKETCPVCGTKTKIAHPPRFSPEDPYGEYRRRLKREQLGIVKR.

It belongs to the NOP10 family.

Its function is as follows. Involved in ribosome biogenesis; more specifically in 18S rRNA pseudouridylation and in cleavage of pre-rRNA. The protein is Ribosome biogenesis protein Nop10 of Thermococcus onnurineus (strain NA1).